A 239-amino-acid chain; its full sequence is Probable transcriptional regulatory protein lin0388 (239 aa).

This sequence belongs to the TACO1 family. YeeN subfamily.

Its subcellular location is the cytoplasm. This chain is Probable transcriptional regulatory protein lin0388, found in Listeria innocua serovar 6a (strain ATCC BAA-680 / CLIP 11262).